A 1079-amino-acid polypeptide reads, in one-letter code: Translation initiation factor IF-2 (1079 aa).

3 stretches are compositionally biased toward basic and acidic residues: residues 52 to 65 (VQAQ…KEGN), 75 to 90 (RDGD…KAPE), and 102 to 134 (APER…KEPQ). The interval 52-488 (VQAQRDGGAR…RGKKDVRPAA (437 aa)) is disordered. The segment covering 150–184 (APVAKVVEAAPAETPAPEAPAVKATVTAEAAPAKT) has biased composition (low complexity). A compositionally biased stretch (basic and acidic residues) spans 185–194 (VEPESERPQA). Residues 276–291 (AAVAQQQMQQQAAQQQ) are compositionally biased toward low complexity. Residues 306–327 (GGYRPEGQREGGYRPEGQREGG) show a composition bias toward basic and acidic residues. 2 stretches are compositionally biased toward low complexity: residues 348–370 (EGGY…GPRP) and 380–398 (PGAP…APRP). Over residues 419-429 (PRPGGFGGAPG) the composition is skewed to gly residues. The span at 461-471 (PRGRSDDDVMR) shows a compositional bias: basic and acidic residues. Residues 473 to 482 (PRGRGKRGKK) show a composition bias toward basic residues. One can recognise a tr-type G domain in the interval 578-745 (TRPPVVTIMG…LIAIQAEILE (168 aa)). A G1 region spans residues 587-594 (GHVDHGKT). 587-594 (GHVDHGKT) contributes to the GTP binding site. The interval 612–616 (GITQH) is G2. Positions 633–636 (DTPG) are G3. GTP-binding positions include 633–637 (DTPGH) and 687–690 (NKMD). Positions 687–690 (NKMD) are G4. The tract at residues 723–725 (SAK) is G5.

The protein belongs to the TRAFAC class translation factor GTPase superfamily. Classic translation factor GTPase family. IF-2 subfamily.

It localises to the cytoplasm. In terms of biological role, one of the essential components for the initiation of protein synthesis. Protects formylmethionyl-tRNA from spontaneous hydrolysis and promotes its binding to the 30S ribosomal subunits. Also involved in the hydrolysis of GTP during the formation of the 70S ribosomal complex. The sequence is that of Translation initiation factor IF-2 from Nitratidesulfovibrio vulgaris (strain DP4) (Desulfovibrio vulgaris).